The following is a 322-amino-acid chain: Elongation factor Ts, mitochondrial (322 aa).

It belongs to the EF-Ts family.

The protein localises to the mitochondrion. In terms of biological role, associates with the EF-Tu.GDP complex and induces the exchange of GDP to GTP. It remains bound to the aminoacyl-tRNA.EF-Tu.GTP complex up to the GTP hydrolysis stage on the ribosome. The chain is Elongation factor Ts, mitochondrial from Chlamydomonas reinhardtii (Chlamydomonas smithii).